The following is a 374-amino-acid chain: Peptide chain release factor 2 (374 aa).

Gln254 is subject to N5-methylglutamine.

This sequence belongs to the prokaryotic/mitochondrial release factor family. In terms of processing, methylated by PrmC. Methylation increases the termination efficiency of RF2.

It is found in the cytoplasm. Functionally, peptide chain release factor 2 directs the termination of translation in response to the peptide chain termination codons UGA and UAA. The chain is Peptide chain release factor 2 from Renibacterium salmoninarum (strain ATCC 33209 / DSM 20767 / JCM 11484 / NBRC 15589 / NCIMB 2235).